The primary structure comprises 245 residues: Thiopurine S-methyltransferase (245 aa).

Serine 14 carries the phosphoserine modification. 29 to 40 (WQDKWVNGKTAF) is a binding site for S-adenosyl-L-methionine. Phenylalanine 40 contacts substrate. Position 58 is an N6-acetyllysine (lysine 58). S-adenosyl-L-methionine-binding positions include leucine 69, glutamate 90, 134–135 (SI), and arginine 152.

Belongs to the class I-like SAM-binding methyltransferase superfamily. TPMT family. As to quaternary structure, monomer.

The protein localises to the cytoplasm. The enzyme catalyses S-adenosyl-L-methionine + a thiopurine = S-adenosyl-L-homocysteine + a thiopurine S-methylether.. The sequence is that of Thiopurine S-methyltransferase (TPMT) from Gorilla gorilla gorilla (Western lowland gorilla).